We begin with the raw amino-acid sequence, 115 residues long: MSNIIKQIEQEQLKQDVPSFRPGDSVEVKVWVVEGAKKRLQAFEGVVIAIRNRGLHSAFTVRKISNGEGVERVFQTHSPVIDSITVKRRGAVRQAKLYYLRERTGKSARIKERLG.

This sequence belongs to the bacterial ribosomal protein bL19 family.

This protein is located at the 30S-50S ribosomal subunit interface and may play a role in the structure and function of the aminoacyl-tRNA binding site. The polypeptide is Large ribosomal subunit protein bL19 (Erwinia tasmaniensis (strain DSM 17950 / CFBP 7177 / CIP 109463 / NCPPB 4357 / Et1/99)).